We begin with the raw amino-acid sequence, 436 residues long: tRNA-2-methylthio-N(6)-dimethylallyladenosine synthase (436 aa).

One can recognise an MTTase N-terminal domain in the interval 1-115 (MRVFFKTYGC…IAEVLQKAAR (115 aa)). Residues cysteine 10, cysteine 46, cysteine 80, cysteine 151, cysteine 155, and cysteine 158 each coordinate [4Fe-4S] cluster. Residues 137 to 368 (RFSKHHAWIT…LELQKQINRE (232 aa)) enclose the Radical SAM core domain. The TRAM domain maps to 371-432 (MQYLGKVVEI…AGPLYGKLQK (62 aa)).

This sequence belongs to the methylthiotransferase family. MiaB subfamily. In terms of assembly, monomer. Requires [4Fe-4S] cluster as cofactor.

It localises to the cytoplasm. It catalyses the reaction N(6)-dimethylallyladenosine(37) in tRNA + (sulfur carrier)-SH + AH2 + 2 S-adenosyl-L-methionine = 2-methylsulfanyl-N(6)-dimethylallyladenosine(37) in tRNA + (sulfur carrier)-H + 5'-deoxyadenosine + L-methionine + A + S-adenosyl-L-homocysteine + 2 H(+). Catalyzes the methylthiolation of N6-(dimethylallyl)adenosine (i(6)A), leading to the formation of 2-methylthio-N6-(dimethylallyl)adenosine (ms(2)i(6)A) at position 37 in tRNAs that read codons beginning with uridine. The sequence is that of tRNA-2-methylthio-N(6)-dimethylallyladenosine synthase from Pseudothermotoga lettingae (strain ATCC BAA-301 / DSM 14385 / NBRC 107922 / TMO) (Thermotoga lettingae).